The chain runs to 506 residues: Histone acetyltransferase esa-1 (506 aa).

Residues 1–24 (MSPPGGDATVGSDEKRQKGKATPD) are disordered. The Tudor-knot domain occupies 26 to 78 (IKMGCIAMVMKEGQLRRAEILSIKDTKSGRQFYCNFDNFNKRLDEWVPAARID). A disordered region spans residues 82 to 215 (DVEWPNPDKD…LRTSGSMTQN (134 aa)). Basic and acidic residues predominate over residues 87-98 (NPDKDKQKDAKT). A compositionally biased stretch (basic residues) spans 109-120 (QPSKKNNQKKAS). The span at 167-178 (GGDKGVKRKADE) shows a compositional bias: basic and acidic residues. One can recognise an MYST-type HAT domain in the interval 220-494 (SRIRNISKVE…IDPERIQWKP (275 aa)). The C2HC MYST-type zinc finger occupies 253–278 (IYICEFCLSYYGELKSFVRHRQKCTL). The short motif at 303 to 324 (RTWCRNLCLLSKMFLDHKTLYY) is the ESA1-RPD3 motif element. Lys-320 carries the N6-acetyllysine; by autocatalysis modification. Acetyl-CoA is bound by residues 361–365 (ACILT) and 370–376 (QRKGYGR). The Proton donor/acceptor role is filled by Glu-396. Ser-400 is an acetyl-CoA binding site.

The protein belongs to the MYST (SAS/MOZ) family. As to quaternary structure, component of the NuA4 histone acetyltransferase complex. In terms of processing, autoacetylation at Lys-320 is required for proper function.

The protein localises to the nucleus. Its subcellular location is the chromosome. The enzyme catalyses L-lysyl-[histone] + acetyl-CoA = N(6)-acetyl-L-lysyl-[histone] + CoA + H(+). The catalysed reaction is L-lysyl-[protein] + acetyl-CoA = N(6)-acetyl-L-lysyl-[protein] + CoA + H(+). It carries out the reaction 2-hydroxyisobutanoyl-CoA + L-lysyl-[protein] = N(6)-(2-hydroxyisobutanoyl)-L-lysyl-[protein] + CoA + H(+). It catalyses the reaction (2E)-butenoyl-CoA + L-lysyl-[protein] = N(6)-(2E)-butenoyl-L-lysyl-[protein] + CoA + H(+). Functionally, catalytic component of the NuA4 histone acetyltransferase (HAT) complex which is involved in epigenetic transcriptional activation of selected genes principally by acetylation of nucleosomal histones H4, H3, H2B, H2A and H2A variant H2A.Z. Acetylates histone H4 to form H4K5ac, H4K8ac, H4K12ac and H4K16ac, histone H3 to form H3K14ac, and histone H2A to form H2AK4ac and H2AK7ac. The NuA4 complex is involved in the DNA damage response and is required for chromosome segregation. The NuA4 complex plays a direct role in repair of DNA double-strand breaks (DSBs) through homologous recombination. Recruitment to promoters depends on H3K4me. Also acetylates non-histone proteins. In addition to protein acetyltransferase, can use different acyl-CoA substrates, such as 2-hydroxyisobutanoyl-CoA (2-hydroxyisobutyryl-CoA) or (2E)-butenoyl-CoA (crotonyl-CoA), and is able to mediate protein 2-hydroxyisobutyrylation and crotonylation, respectively. This Neurospora crassa (strain ATCC 24698 / 74-OR23-1A / CBS 708.71 / DSM 1257 / FGSC 987) protein is Histone acetyltransferase esa-1 (esa-1).